A 332-amino-acid polypeptide reads, in one-letter code: DNA-directed RNA polymerase subunit alpha (332 aa).

Residues 1–234 (MTVTISQVLR…DQLSVFGDFT (234 aa)) form an alpha N-terminal domain (alpha-NTD) region. Residues 248-332 (VDPVLLRPID…PGVSQYGMLG (85 aa)) are alpha C-terminal domain (alpha-CTD).

This sequence belongs to the RNA polymerase alpha chain family. In terms of assembly, homodimer. The RNAP catalytic core consists of 2 alpha, 1 beta, 1 beta' and 1 omega subunit. When a sigma factor is associated with the core the holoenzyme is formed, which can initiate transcription.

It catalyses the reaction RNA(n) + a ribonucleoside 5'-triphosphate = RNA(n+1) + diphosphate. Its function is as follows. DNA-dependent RNA polymerase catalyzes the transcription of DNA into RNA using the four ribonucleoside triphosphates as substrates. This chain is DNA-directed RNA polymerase subunit alpha, found in Xylella fastidiosa (strain M12).